A 349-amino-acid chain; its full sequence is Methionine import ATP-binding protein MetN (349 aa).

In terms of domain architecture, ABC transporter spans 5-245; that stretch reads IDLKNITVQF…PQKQLTRQFV (241 aa). 37–44 lines the ATP pocket; that stretch reads GFSGAGKS.

It belongs to the ABC transporter superfamily. Methionine importer (TC 3.A.1.24) family. In terms of assembly, the complex is composed of two ATP-binding proteins (MetN), two transmembrane proteins (MetI) and a solute-binding protein (MetQ).

The protein localises to the cell membrane. The enzyme catalyses L-methionine(out) + ATP + H2O = L-methionine(in) + ADP + phosphate + H(+). It carries out the reaction D-methionine(out) + ATP + H2O = D-methionine(in) + ADP + phosphate + H(+). Its function is as follows. Part of the ABC transporter complex MetNIQ involved in methionine import. Responsible for energy coupling to the transport system. The chain is Methionine import ATP-binding protein MetN from Lactobacillus johnsonii (strain CNCM I-12250 / La1 / NCC 533).